The primary structure comprises 307 residues: Sesquiterpene synthase-like protein Agr10 (307 aa).

Residues 287–307 (GRYFGDRGPENQSDIPTSSNR) form a disordered region. A compositionally biased stretch (polar residues) spans 296–307 (ENQSDIPTSSNR).

This sequence belongs to the terpene synthase family.

The protein is Sesquiterpene synthase-like protein Agr10 of Cyclocybe aegerita (Black poplar mushroom).